Consider the following 384-residue polypeptide: S-adenosylmethionine synthase (384 aa).

An ATP-binding site is contributed by His-15. A Mg(2+)-binding site is contributed by Asp-17. Position 43 (Glu-43) interacts with K(+). Residues Glu-56 and Gln-99 each coordinate L-methionine. The flexible loop stretch occupies residues 99-109; the sequence is QSPDINQGVDK. Residues 164-166, 230-231, Asp-239, 245-246, Ala-262, and Lys-266 each bind ATP; these read DAK, RF, and RK. Position 239 (Asp-239) interacts with L-methionine. Position 270 (Lys-270) interacts with L-methionine.

It belongs to the AdoMet synthase family. As to quaternary structure, homotetramer; dimer of dimers. The cofactor is Mg(2+). K(+) serves as cofactor.

It is found in the cytoplasm. It carries out the reaction L-methionine + ATP + H2O = S-adenosyl-L-methionine + phosphate + diphosphate. It participates in amino-acid biosynthesis; S-adenosyl-L-methionine biosynthesis; S-adenosyl-L-methionine from L-methionine: step 1/1. In terms of biological role, catalyzes the formation of S-adenosylmethionine (AdoMet) from methionine and ATP. The overall synthetic reaction is composed of two sequential steps, AdoMet formation and the subsequent tripolyphosphate hydrolysis which occurs prior to release of AdoMet from the enzyme. This Vibrio parahaemolyticus serotype O3:K6 (strain RIMD 2210633) protein is S-adenosylmethionine synthase.